We begin with the raw amino-acid sequence, 74 residues long: uncharacterized protein (74 aa).

The chain crosses the membrane as a helical span at residues 8–30; sequence LAAAVSSSAASAGVSRIAASAMA.

The protein localises to the mitochondrion outer membrane. This is an uncharacterized protein from Saccharomyces cerevisiae (strain ATCC 204508 / S288c) (Baker's yeast).